Here is a 280-residue protein sequence, read N- to C-terminus: Fe-S cluster assembly protein DRE2 (280 aa).

The interval Met1–Gly121 is N-terminal SAM-like domain. The tract at residues Pro122 to Leu176 is linker. Positions 186, 198, 201, and 203 each coordinate [2Fe-2S] cluster. Positions Cys186–Cys203 are fe-S binding site A. [4Fe-4S] cluster contacts are provided by Cys244, Cys247, Cys255, and Cys258. 2 short sequence motifs (cx2C motif) span residues Cys244 to Cys247 and Cys255 to Cys258. Residues Cys244 to Cys258 are fe-S binding site B.

Belongs to the anamorsin family. Monomer. Interacts with TAH18. Interacts with MIA40. [2Fe-2S] cluster serves as cofactor. [4Fe-4S] cluster is required as a cofactor.

It is found in the cytoplasm. The protein localises to the mitochondrion intermembrane space. Its function is as follows. Component of the cytosolic iron-sulfur (Fe-S) protein assembly (CIA) machinery required for the maturation of extramitochondrial Fe-S proteins. Part of an electron transfer chain functioning in an early step of cytosolic Fe-S biogenesis, facilitating the de novo assembly of a [4Fe-4S] cluster on the scaffold complex CFD1-NBP35. Electrons are transferred to DRE2 from NADPH via the FAD- and FMN-containing protein TAH18. TAH18-DRE2 are also required for the assembly of the diferric tyrosyl radical cofactor of ribonucleotide reductase (RNR), probably by providing electrons for reduction during radical cofactor maturation in the catalytic small subunit RNR2. The chain is Fe-S cluster assembly protein DRE2 from Yarrowia lipolytica (strain CLIB 122 / E 150) (Yeast).